We begin with the raw amino-acid sequence, 365 residues long: Alanine racemase (365 aa).

The active-site Proton acceptor; specific for D-alanine is Lys32. At Lys32 the chain carries N6-(pyridoxal phosphate)lysine. Substrate is bound at residue Arg128. Residue Tyr257 is the Proton acceptor; specific for L-alanine of the active site. A substrate-binding site is contributed by Met305.

This sequence belongs to the alanine racemase family. The cofactor is pyridoxal 5'-phosphate.

It catalyses the reaction L-alanine = D-alanine. The protein operates within amino-acid biosynthesis; D-alanine biosynthesis; D-alanine from L-alanine: step 1/1. Catalyzes the interconversion of L-alanine and D-alanine. May also act on other amino acids. This Francisella philomiragia subsp. philomiragia (strain ATCC 25017 / CCUG 19701 / FSC 153 / O#319-036) protein is Alanine racemase (alr).